Reading from the N-terminus, the 115-residue chain is Ribosome-binding factor A (115 aa).

Belongs to the RbfA family. As to quaternary structure, monomer. Binds 30S ribosomal subunits, but not 50S ribosomal subunits or 70S ribosomes.

The protein resides in the cytoplasm. In terms of biological role, one of several proteins that assist in the late maturation steps of the functional core of the 30S ribosomal subunit. Associates with free 30S ribosomal subunits (but not with 30S subunits that are part of 70S ribosomes or polysomes). Required for efficient processing of 16S rRNA. May interact with the 5'-terminal helix region of 16S rRNA. This chain is Ribosome-binding factor A, found in Staphylococcus carnosus (strain TM300).